A 56-amino-acid chain; its full sequence is MQAPDSVRSVKVEREAKTWIEKPRGAGLRVAQKTPVHATTSLTLGTVVHLAFIILP.

This is an uncharacterized protein from Homo sapiens (Human).